The sequence spans 185 residues: Peptidoglycan-recognition protein SC1a (185 aa).

The N-terminal stretch at 1–21 is a signal peptide; the sequence is MVSKVALLLAVLVCSQYMAQG. Residues 46–170 enclose the N-acetylmuramoyl-L-alanine amidase domain; it reads SYAIIHHTAG…RQVSATECPG (125 aa). Position 51 (His51) interacts with Zn(2+). Cys58 and Cys64 are oxidised to a cystine. Residues His160 and Cys168 each contribute to the Zn(2+) site.

The protein belongs to the N-acetylmuramoyl-L-alanine amidase 2 family. Zn(2+) is required as a cofactor.

Its subcellular location is the secreted. It catalyses the reaction Hydrolyzes the link between N-acetylmuramoyl residues and L-amino acid residues in certain cell-wall glycopeptides.. In terms of biological role, N-acetylmuramyl-L-alanine amidase involved in innate immunity by degrading bacterial peptidoglycans (PGN). Plays a scavenger role by digesting biologically active PGN into biologically inactive fragments. Has no direct bacteriolytic activity. In Drosophila melanogaster (Fruit fly), this protein is Peptidoglycan-recognition protein SC1a.